The sequence spans 333 residues: Probable ABC transporter permease protein y4mJ (333 aa).

The next 10 membrane-spanning stretches (helical) occupy residues leucine 30–alanine 50, alanine 62–isoleucine 82, leucine 84–glycine 104, alanine 110–valine 130, leucine 133–valine 153, isoleucine 175–phenylalanine 195, phenylalanine 228–isoleucine 248, serine 253–serine 273, leucine 274–isoleucine 294, and leucine 300–valine 320.

Belongs to the binding-protein-dependent transport system permease family. AraH/RbsC subfamily.

Its subcellular location is the cell inner membrane. Probably part of the binding-protein-dependent transport system y4mIJK. This system probably transports a sugar. Probably responsible for the translocation of the substrate across the membrane. In Sinorhizobium fredii (strain NBRC 101917 / NGR234), this protein is Probable ABC transporter permease protein y4mJ.